The following is a 146-amino-acid chain: Phosphoribosyl-AMP cyclohydrolase (146 aa).

Residue Asp95 participates in Mg(2+) binding. A Zn(2+)-binding site is contributed by Cys96. Residues Asp97 and Asp99 each contribute to the Mg(2+) site. The Zn(2+) site is built by Cys112 and Cys119.

This sequence belongs to the PRA-CH family. As to quaternary structure, homodimer. It depends on Mg(2+) as a cofactor. Zn(2+) serves as cofactor.

The protein resides in the cytoplasm. The enzyme catalyses 1-(5-phospho-beta-D-ribosyl)-5'-AMP + H2O = 1-(5-phospho-beta-D-ribosyl)-5-[(5-phospho-beta-D-ribosylamino)methylideneamino]imidazole-4-carboxamide. It participates in amino-acid biosynthesis; L-histidine biosynthesis; L-histidine from 5-phospho-alpha-D-ribose 1-diphosphate: step 3/9. Its function is as follows. Catalyzes the hydrolysis of the adenine ring of phosphoribosyl-AMP. The protein is Phosphoribosyl-AMP cyclohydrolase of Chromohalobacter salexigens (strain ATCC BAA-138 / DSM 3043 / CIP 106854 / NCIMB 13768 / 1H11).